Here is a 417-residue protein sequence, read N- to C-terminus: UDP-N-acetylglucosamine 1-carboxyvinyltransferase (417 aa).

22 to 23 (KN) contributes to the phosphoenolpyruvate binding site. Arg-93 is a UDP-N-acetyl-alpha-D-glucosamine binding site. Cys-117 acts as the Proton donor in catalysis. Cys-117 is modified (2-(S-cysteinyl)pyruvic acid O-phosphothioketal). Residues 122–126 (RPVDQ), Asp-305, and Ile-327 each bind UDP-N-acetyl-alpha-D-glucosamine.

Belongs to the EPSP synthase family. MurA subfamily.

The protein resides in the cytoplasm. It carries out the reaction phosphoenolpyruvate + UDP-N-acetyl-alpha-D-glucosamine = UDP-N-acetyl-3-O-(1-carboxyvinyl)-alpha-D-glucosamine + phosphate. The protein operates within cell wall biogenesis; peptidoglycan biosynthesis. In terms of biological role, cell wall formation. Adds enolpyruvyl to UDP-N-acetylglucosamine. This Chromobacterium violaceum (strain ATCC 12472 / DSM 30191 / JCM 1249 / CCUG 213 / NBRC 12614 / NCIMB 9131 / NCTC 9757 / MK) protein is UDP-N-acetylglucosamine 1-carboxyvinyltransferase.